We begin with the raw amino-acid sequence, 430 residues long: Adenylosuccinate synthetase (430 aa).

Residues 12–18 (GDEGKGK) and 40–42 (GHT) contribute to the GTP site. Asp13 acts as the Proton acceptor in catalysis. Mg(2+)-binding residues include Asp13 and Gly40. IMP-binding positions include 13–16 (DEGK), 38–41 (NAGH), Thr130, Arg144, Gln224, Thr239, and Arg303. His41 (proton donor) is an active-site residue. Residue 299 to 305 (VNTGRKR) coordinates substrate. Residues Arg305, 331 to 333 (KLD), and 413 to 415 (STS) each bind GTP.

Belongs to the adenylosuccinate synthetase family. As to quaternary structure, homodimer. Mg(2+) is required as a cofactor.

It is found in the cytoplasm. The enzyme catalyses IMP + L-aspartate + GTP = N(6)-(1,2-dicarboxyethyl)-AMP + GDP + phosphate + 2 H(+). It participates in purine metabolism; AMP biosynthesis via de novo pathway; AMP from IMP: step 1/2. Plays an important role in the de novo pathway of purine nucleotide biosynthesis. Catalyzes the first committed step in the biosynthesis of AMP from IMP. This is Adenylosuccinate synthetase from Rhodopseudomonas palustris (strain TIE-1).